Reading from the N-terminus, the 363-residue chain is DNA primase small subunit PriS (363 aa).

Residues Asp-105, Asp-107, and Asp-265 contribute to the active site.

The protein belongs to the eukaryotic-type primase small subunit family. In terms of assembly, heterodimer of a small subunit (PriS) and a large subunit (PriL). Requires Mg(2+) as cofactor. It depends on Mn(2+) as a cofactor.

Its function is as follows. Catalytic subunit of DNA primase, an RNA polymerase that catalyzes the synthesis of short RNA molecules used as primers for DNA polymerase during DNA replication. The small subunit contains the primase catalytic core and has DNA synthesis activity on its own. Binding to the large subunit stabilizes and modulates the activity, increasing the rate of DNA synthesis while decreasing the length of the DNA fragments, and conferring RNA synthesis capability. The DNA polymerase activity may enable DNA primase to also catalyze primer extension after primer synthesis. May also play a role in DNA repair. This chain is DNA primase small subunit PriS, found in Methanococcus maripaludis (strain C7 / ATCC BAA-1331).